The primary structure comprises 305 residues: Serine/threonine-protein phosphatase PP-X isozyme 1 (305 aa).

Residues aspartate 51, histidine 53, aspartate 79, and asparagine 111 each coordinate Mn(2+). The active-site Proton donor is the histidine 112. Positions 161 and 236 each coordinate Mn(2+).

Belongs to the PPP phosphatase family. PP-4 (PP-X) subfamily. In terms of assembly, interacts with TAP46. Requires Mn(2+) as cofactor. As to expression, ubiquitous, mostly expressed in root mersitems, flowers, and vascular tissues.

It localises to the plastid stroma. The enzyme catalyses O-phospho-L-seryl-[protein] + H2O = L-seryl-[protein] + phosphate. It catalyses the reaction O-phospho-L-threonyl-[protein] + H2O = L-threonyl-[protein] + phosphate. The polypeptide is Serine/threonine-protein phosphatase PP-X isozyme 1 (PPX1) (Arabidopsis thaliana (Mouse-ear cress)).